Here is a 435-residue protein sequence, read N- to C-terminus: FAD-dependent monooxygenase ATEG_07662 (435 aa).

Residues 8 to 28 traverse the membrane as a helical segment; that stretch reads PLDVAIIGGGIIGIMTALGLL. FAD contacts are provided by E38, A51, and R119. N-linked (GlcNAc...) asparagine glycosylation occurs at N191. Residue R201 is part of the active site. Residues D317 and A330 each coordinate FAD.

The protein belongs to the paxM FAD-dependent monooxygenase family. The cofactor is FAD.

It is found in the membrane. The protein operates within secondary metabolite biosynthesis. Its function is as follows. FAD-dependent monooxygenase; part of the cluster B that mediates the biosynthesis of azasperpyranones, members of the azaphilone family that exhibit anti-cancer activities. Azasperpyranones are synthesized by 2 clusters, A and B. Cluster A is responsible for the production of the polyhydric phenol moiety while the azaphilonoid scaffold is produced by the cluster B. The non-reducing polyketide synthase ATEG_03629 produces 5-methyl orsellinic acid, which is then reduced to 5-methyl orsellinic aldehyde by the NRPS-like protein ATEG_03630. 5-methyl orsellinic aldehyde is then first hydroxylated by the FAD-dependent monooxygenase ATEG_03635 and subsequently hydroxylated by the cytochrome P450 monooxygenase ATEG_03631 to produce the unstable polyhydric phenol precursor of azasperpyranones. On the other hand, the polyketide synthase ATEG_07659 is responsible for producing the 3,5-dimethyloctadienone moiety from acetyl-CoA, three malonyl-CoA, and two S-adenosyl methionines (SAM). The 3,5-dimethyloctadienone moiety is then loaded onto the SAT domain of ATEG_07661 and extended with four malonyl-CoA and one SAM, which leads to the formation of 2,4-dihydroxy-6-(5,7-dimethyl-2-oxo-trans-3-trans-5-nonadienyl)-3-methylbenzaldehyde (compound 8) after reductive release and aldol condensation. The FAD-dependent monooxygenase ATEG_07662 is the next enzyme in the biosynthesis sequence and hydroxylates the side chain at the benzylic position of compound 8. In Aspergillus nidulans, afoF, the ortholog of the FAD-dependent oxygenase ATEG_07660, is the key enzyme for the biosynthesis of asperfuranone by catalyzing the hydroxylation at C-8 of to prevent the formation of a six-membered ring hemiacetal intermediate and thus facilitating the formation of a five-membered ring to produce asperfuranone. In Aspergillus terreus, ATEG_07660 is probably not functional, which leads to the formation of the six-membered ring hemiacetal intermediate presperpyranone instead of asperfuranone. Finally, ATEG_03636 is involved in the condensation of the polyhydric phenol moiety produced by cluster A and the perasperpyranone precursor produced by cluster B, to yield azasperpyranone A. Further modifications of azasperpyranone A result in the production of derivatives, including azasperpyranone B to F. In Aspergillus terreus (strain NIH 2624 / FGSC A1156), this protein is FAD-dependent monooxygenase ATEG_07662.